The primary structure comprises 434 residues: Carboxy-terminal-processing protease (434 aa).

The signal sequence occupies residues 1–23 (MIRKVIFFVAGVFLSASLIVMAQ). One can recognise a PDZ domain in the interval 86 to 166 (DMRDSTKGEF…TPITLTINRF (81 aa)). Active-site charge relay system residues include Ser-294, Asp-305, and Lys-319. Residues 383 to 392 (HIKGKQESDK) are compositionally biased toward basic and acidic residues. The disordered stretch occupies residues 383–406 (HIKGKQESDKGSGSAAFVPRDPKD).

The protein belongs to the peptidase S41A family. May undergo autocatalytic processing at the C-terminus (398-434 or 425-434 missing).

It localises to the secreted. It carries out the reaction The enzyme shows specific recognition of a C-terminal tripeptide, Xaa-Yaa-Zaa, in which Xaa is preferably Ala or Leu, Yaa is preferably Ala or Tyr, and Zaa is preferably Ala, but then cleaves at a variable distance from the C-terminus. A typical cleavage is -Ala-Ala-|-Arg-Ala-Ala-Lys-Glu-Asn-Tyr-Ala-Leu-Ala-Ala.. Its function is as follows. Involved in protection of the bacterium from thermal and osmotic stresses. The chain is Carboxy-terminal-processing protease (ctpA) from Bartonella bacilliformis (strain ATCC 35685 / KC583 / Herrer 020/F12,63).